The chain runs to 34 residues: U2-theraphotoxin-Bs1a (34 aa).

Intrachain disulfides connect Cys2–Cys16, Cys9–Cys21, and Cys15–Cys28.

In terms of tissue distribution, expressed by the venom gland.

It is found in the secreted. In Brachypelma smithi (Mexican red knee tarantula), this protein is U2-theraphotoxin-Bs1a.